The following is a 102-amino-acid chain: uncharacterized protein (102 aa).

Transmembrane regions (helical) follow at residues 38-58 (FYVWSSRIYVLVLVVQAQLIL) and 64-84 (VLFLLLFFLHNFFLLPQLFQF).

The protein resides in the membrane. This is an uncharacterized protein from Saccharomyces cerevisiae (strain ATCC 204508 / S288c) (Baker's yeast).